We begin with the raw amino-acid sequence, 377 residues long: TraB domain-containing protein (377 aa).

Met1 is subject to N-acetylmethionine. The segment at 1–34 (MEEPEEQPPHEADTEPVVTSGASEAVPRVLPGDP) is disordered. Thr65 bears the Phosphothreonine mark.

This is TraB domain-containing protein (TRABD) from Bos taurus (Bovine).